Reading from the N-terminus, the 161-residue chain is ATP synthase subunit b (161 aa).

A helical membrane pass occupies residues 1 to 21; that stretch reads MYLNATILGQVIAFILFVWFC.

Belongs to the ATPase B chain family. As to quaternary structure, F-type ATPases have 2 components, F(1) - the catalytic core - and F(0) - the membrane proton channel. F(1) has five subunits: alpha(3), beta(3), gamma(1), delta(1), epsilon(1). F(0) has three main subunits: a(1), b(2) and c(10-14). The alpha and beta chains form an alternating ring which encloses part of the gamma chain. F(1) is attached to F(0) by a central stalk formed by the gamma and epsilon chains, while a peripheral stalk is formed by the delta and b chains.

The protein resides in the cell inner membrane. Its function is as follows. F(1)F(0) ATP synthase produces ATP from ADP in the presence of a proton or sodium gradient. F-type ATPases consist of two structural domains, F(1) containing the extramembraneous catalytic core and F(0) containing the membrane proton channel, linked together by a central stalk and a peripheral stalk. During catalysis, ATP synthesis in the catalytic domain of F(1) is coupled via a rotary mechanism of the central stalk subunits to proton translocation. In terms of biological role, component of the F(0) channel, it forms part of the peripheral stalk, linking F(1) to F(0). This chain is ATP synthase subunit b, found in Blochmanniella floridana.